We begin with the raw amino-acid sequence, 615 residues long: Mitochondrial distribution and morphology protein 34 (615 aa).

The region spanning 1 to 195 is the SMP-LTD domain; it reads MAFNFNWSPL…LPAIIHRLSL (195 aa). Disordered regions lie at residues 293-313, 346-566, and 596-615; these read SDKP…RTSS, ATTG…PQPD, and PAFW…YEPR. Residues 301–313 show a composition bias toward polar residues; it reads TPASTPNLHRTSS. The span at 346–355 shows a compositional bias: low complexity; that stretch reads ATTGLSLGSG. Positions 356-367 are enriched in basic residues; the sequence is RHSKAGRKKKMR. Polar residues-rich tracts occupy residues 384 to 403, 435 to 446, and 457 to 499; these read IGST…TRTP, DATTSARASESS, and VTAQ…YSSR. Low complexity predominate over residues 517–557; sequence QQQQFQQQQQQQQQQQQQQQQQQQQQQQQQQQQQQQQQQQQ. Residues 596–606 are compositionally biased toward basic and acidic residues; that stretch reads PAFWEDSHQHD.

The protein belongs to the MDM34 family. In terms of assembly, component of the ER-mitochondria encounter structure (ERMES) or MDM complex, composed of mmm-1, mdm10, mdm12 and mdm34.

Its subcellular location is the mitochondrion outer membrane. In terms of biological role, component of the ERMES/MDM complex, which serves as a molecular tether to connect the endoplasmic reticulum (ER) and mitochondria. Components of this complex are involved in the control of mitochondrial shape and protein biogenesis, and function in nonvesicular lipid trafficking between the ER and mitochondria. Mdm34 is required for the interaction of the ER-resident membrane protein mmm-1 and the outer mitochondrial membrane-resident beta-barrel protein mdm10. The sequence is that of Mitochondrial distribution and morphology protein 34 from Neurospora crassa (strain ATCC 24698 / 74-OR23-1A / CBS 708.71 / DSM 1257 / FGSC 987).